The following is a 525-amino-acid chain: Peptide chain release factor 3 (525 aa).

The region spanning 11 to 279 (NNRRTFAIIS…AYLKYAPKPA (269 aa)) is the tr-type G domain. GTP is bound by residues 20-27 (SHPDAGKT), 88-92 (DTPGH), and 142-145 (NKLD).

This sequence belongs to the TRAFAC class translation factor GTPase superfamily. Classic translation factor GTPase family. PrfC subfamily.

It is found in the cytoplasm. In terms of biological role, increases the formation of ribosomal termination complexes and stimulates activities of RF-1 and RF-2. It binds guanine nucleotides and has strong preference for UGA stop codons. It may interact directly with the ribosome. The stimulation of RF-1 and RF-2 is significantly reduced by GTP and GDP, but not by GMP. The polypeptide is Peptide chain release factor 3 (Ligilactobacillus salivarius (strain UCC118) (Lactobacillus salivarius)).